Here is a 29-residue protein sequence, read N- to C-terminus: Kalata-B11 (29 aa).

The cyclopeptide (Gly-Asp) cross-link spans 1–29; that stretch reads GLPVCGETCFGGTCNTPGCSCTDPICTRD. 3 disulfide bridges follow: Cys-5/Cys-19, Cys-9/Cys-21, and Cys-14/Cys-26.

In terms of processing, this is a cyclic peptide.

Functionally, probably participates in a plant defense mechanism. This is Kalata-B11 from Oldenlandia affinis.